Reading from the N-terminus, the 166-residue chain is Phosphopantetheine adenylyltransferase (166 aa).

Ser8 contributes to the substrate binding site. Residues 8–9 and His16 contribute to the ATP site; that span reads SF. Residues Lys40, Thr72, and Arg86 each contribute to the substrate site. ATP is bound by residues 87-89, Glu97, and 122-128; these read GLR and HSFLSSS.

Belongs to the bacterial CoaD family. As to quaternary structure, homohexamer. The cofactor is Mg(2+).

Its subcellular location is the cytoplasm. It carries out the reaction (R)-4'-phosphopantetheine + ATP + H(+) = 3'-dephospho-CoA + diphosphate. The protein operates within cofactor biosynthesis; coenzyme A biosynthesis; CoA from (R)-pantothenate: step 4/5. Functionally, reversibly transfers an adenylyl group from ATP to 4'-phosphopantetheine, yielding dephospho-CoA (dPCoA) and pyrophosphate. This Synechococcus sp. (strain RCC307) protein is Phosphopantetheine adenylyltransferase.